A 289-amino-acid polypeptide reads, in one-letter code: Glucosamine-6-phosphate deaminase 1 (289 aa).

N6-acetyllysine is present on Lys-64. Asp-72 (proton acceptor; for enolization step) is an active-site residue. Catalysis depends on Asp-141, which acts as the For ring-opening step. His-143 functions as the Proton acceptor; for ring-opening step in the catalytic mechanism. The active-site For ring-opening step is Glu-148. A Phosphothreonine modification is found at Thr-161.

Belongs to the glucosamine/galactosamine-6-phosphate isomerase family. Homohexamer.

It is found in the cytoplasm. It catalyses the reaction alpha-D-glucosamine 6-phosphate + H2O = beta-D-fructose 6-phosphate + NH4(+). Its pathway is nucleotide-sugar biosynthesis; UDP-N-acetyl-alpha-D-glucosamine biosynthesis; alpha-D-glucosamine 6-phosphate from D-fructose 6-phosphate: step 1/1. Allosterically activated by N-acetylglucosamine-6-phosphate (GlcNAc6P). Functionally, catalyzes the reversible conversion of alpha-D-glucosamine 6-phosphate (GlcN-6P) into beta-D-fructose 6-phosphate (Fru-6P) and ammonium ion, a regulatory reaction step in de novo uridine diphosphate-N-acetyl-alpha-D-glucosamine (UDP-GlcNAc) biosynthesis via hexosamine pathway. Deamination is coupled to aldo-keto isomerization mediating the metabolic flux from UDP-GlcNAc toward Fru-6P. At high ammonium level can drive amination and isomerization of Fru-6P toward hexosamines and UDP-GlcNAc synthesis. Has a role in fine tuning the metabolic fluctuations of cytosolic UDP-GlcNAc and their effects on hyaluronan synthesis that occur during tissue remodeling. Seems to trigger calcium oscillations in mammalian eggs. These oscillations serve as the essential trigger for egg activation and early development of the embryo. The protein is Glucosamine-6-phosphate deaminase 1 of Bos taurus (Bovine).